The chain runs to 225 residues: Uracil-DNA glycosylase (225 aa).

Aspartate 65 (proton acceptor) is an active-site residue.

The protein belongs to the uracil-DNA glycosylase (UDG) superfamily. UNG family.

It localises to the cytoplasm. It catalyses the reaction Hydrolyzes single-stranded DNA or mismatched double-stranded DNA and polynucleotides, releasing free uracil.. Its function is as follows. Excises uracil residues from the DNA which can arise as a result of misincorporation of dUMP residues by DNA polymerase or due to deamination of cytosine. This is Uracil-DNA glycosylase from Bacillus cereus (strain B4264).